A 440-amino-acid chain; its full sequence is 6-phospho-alpha-glucosidase (440 aa).

4-70 (FSIVVAGGGS…PDINFVYTTD (67 aa)) serves as a coordination point for NAD(+). Substrate-binding residues include arginine 93 and asparagine 147. Cysteine 169 is a binding site for Mn(2+). Catalysis depends on aspartate 170, which acts as the Proton donor. Residue histidine 200 participates in Mn(2+) binding. Tyrosine 263 acts as the Proton acceptor in catalysis. Arginine 283 contacts substrate.

It belongs to the glycosyl hydrolase 4 family. Homodimer. It depends on NAD(+) as a cofactor. The cofactor is Mn(2+).

The protein operates within glycan degradation; palatinose degradation. Functionally, in vitro, readily hydrolyzes p-nitrophenyl-alpha-D-glucopyranoside 6-phosphate (pNPalphaG6P), a chromogenic analog of the phosphorylated isomers of sucrose. In vivo, is probably involved in the degradation of the 6-phosphate derivatives of the sucrose isomers trehalulose, turanose, maltulose and palatinose, catalyzing their hydrolysis into glucose 6-phosphate (G6P) and fructose, which allows the bacterium to use these sugars as energy sources for growth. Is not able to hydrolyze the C2 or C4 chromogenic stereomers (i.e. pNPalpha-mannopyranoside-6P and pNPalpha-galactopyranoside-6P, respectively). This chain is 6-phospho-alpha-glucosidase (pagL), found in Leptotrichia buccalis (strain ATCC 14201 / DSM 1135 / JCM 12969 / NCTC 10249 / C-1013-b).